A 287-amino-acid chain; its full sequence is Neugrin (287 aa).

The first 23 residues, 1–23 (MAFSPNVLLGGRVCAAVARSGFA), serve as a signal peptide directing secretion. The tract at residues 149-169 (SIPELPGPGDSSKPLSAGQSV) is disordered. Asparagine 202 carries an N-linked (GlcNAc...) asparagine glycan.

It belongs to the neugrin family. In terms of assembly, forms a regulatory protein-RNA complex, consisting of RCC1L, NGRN, RPUSD3, RPUSD4, TRUB2, FASTKD2 and 16S mt-rRNA. Interacts with 16S mt-rRNA; this interaction is direct.

The protein resides in the nucleus. The protein localises to the secreted. Its subcellular location is the mitochondrion membrane. Functionally, plays an essential role in mitochondrial ribosome biogenesis. As a component of a functional protein-RNA module, consisting of RCC1L, NGRN, RPUSD3, RPUSD4, TRUB2, FASTKD2 and 16S mitochondrial ribosomal RNA (16S mt-rRNA), controls 16S mt-rRNA abundance and is required for intra-mitochondrial translation of core subunits of the oxidative phosphorylation system. This chain is Neugrin (NGRN), found in Bos taurus (Bovine).